The primary structure comprises 354 residues: Lariat debranching enzyme (354 aa).

Cys-14, His-16, and Asp-45 together coordinate a divalent metal cation. RNA-binding residues include Lys-59, Asn-90, His-91, Lys-134, and His-156. Asn-90 is a binding site for a divalent metal cation. Residues 130–158 (SGIYKSFDEKKPYTYPPSPNDVVSLFHTR) are lariat recognition loop. Position 180 (His-180) interacts with a divalent metal cation. The RNA site is built by Gly-201, Asp-205, His-230, Met-231, and His-232. His-230 is a binding site for a divalent metal cation. Position 232 (His-232) interacts with a divalent metal cation.

This sequence belongs to the lariat debranching enzyme family. Fe(2+) serves as cofactor. It depends on Zn(2+) as a cofactor. The cofactor is Mn(2+).

It is found in the cytoplasm. Its subcellular location is the perinuclear region. With respect to regulation, active in presence of diverse metals including Fe(2+), Zn(2+) and Mn(2+). Binds two metal cations in two adjacent alpha and beta metal-binding pockets. The activity is the highest with Fe(2+) bound to the 2 metal-binding sites. The activity is slightly lower with Fe(2+) bound to the beta site and Zn(2+) to the alpha site and decreases further when only Zn(2+) is bound. No activity with Mn(2+). However, another study showed activity with Mn(2+) bound to the beta site and Zn(2+) to the alpha site. Mn(2+) appears unable to bind to the alpha site. Cleaves the 2'-5' phosphodiester linkage at the branch point of excised lariat intron RNA and converts them into linear molecules that can be subsequently degraded, thereby facilitating ribonucleotide turnover. The polypeptide is Lariat debranching enzyme (Entamoeba histolytica (strain ATCC 30459 / HM-1:IMSS / ABRM)).